We begin with the raw amino-acid sequence, 235 residues long: Ion-translocating oxidoreductase complex subunit E (235 aa).

5 consecutive transmembrane segments (helical) span residues 63 to 83 (LGLG…ISLF), 93 to 113 (IPIY…LMNA), 117 to 137 (TLYQ…IIIG), 152 to 172 (IWDG…LGAL), and 206 to 226 (SFLL…LLAI).

Belongs to the NqrDE/RnfAE family. As to quaternary structure, the complex is composed of six subunits: RnfA, RnfB, RnfC, RnfD, RnfE and RnfG.

Its subcellular location is the cell inner membrane. Part of a membrane-bound complex that couples electron transfer with translocation of ions across the membrane. This chain is Ion-translocating oxidoreductase complex subunit E, found in Haemophilus influenzae (strain 86-028NP).